We begin with the raw amino-acid sequence, 301 residues long: Syntaxin-17 (301 aa).

Residue serine 2 is modified to N-acetylserine. Residues 2 to 227 (SEDEEKVKLR…KNLQKAAKYK (226 aa)) are Cytoplasmic-facing. Lysine 41 is subject to N6-acetyllysine. Positions 49-128 (DKLHEEHINA…QVKNEEALLQ (80 aa)) form a coiled coil. Tyrosine 156 is modified (phosphotyrosine; by ABL1). Residues 161–223 (IPRDQNAAES…EEGTKNLQKA (63 aa)) enclose the t-SNARE coiled-coil homology domain. A helical membrane pass occupies residues 228-248 (LAALPVAGAVIGGVVGGPIGL). The tract at residues 228-274 (LAALPVAGAVIGGVVGGPIGLLAGFKVAGIAAALGGGVLGFTGGKLI) is necessary and sufficient for localization to autophagosome. Residues 249-253 (LAGFK) are Lumenal-facing. The helical transmembrane segment at 254–274 (VAGIAAALGGGVLGFTGGKLI) threads the bilayer. Positions 273–301 (LIQRRKQKMMEKLTSSCPDLPSQSDKKCS) are required for interaction with COPB1, TMED9 and TMED10. Residues 275-301 (QRRKQKMMEKLTSSCPDLPSQSDKKCS) lie on the Cytoplasmic side of the membrane. Phosphoserine is present on serine 288. Positions 298 to 301 (KKCS) match the Endoplasmic reticulum retention signal motif.

Belongs to the syntaxin family. In terms of assembly, forms a SNARE complex composed of VAMP8, SNAP29 and STX17 involved in fusion of autophagosome with lysosome. May interact with VAMP7. May interact with VTI1B. Probably interacts with BET1, SCFD1 and SEC22B. Interacts with PTPN2 and ABL1; involved in STX17 phosphorylation. Interacts with COPB1. Interacts with TMED9 and TMED10; the interaction is direct. Interacts with RUBCNL/PACER; promoting targeting of RUBCNL/PACER to autophagosome. Interacts with VAMP8, SNAP29, VPS39 and VPS41; these interactions are increased in the absence of TMEM39A. Interacts with IRGM; promoting STX17 recruitment to autophagosomes. Interacts with ATG8 proteins GABARAP and MAP1LC3B. Interacts with RNF115; this interaction enhances STX17 stability which in turn promotes autophagosome maturation. Interacts with RAB39A (GTP-bound); the interaction promotes autophagosome-lysosome membrane fusion driven by STX17-SNAP29-VAMP8. Interacts with RAB39B; the interaction may promote a different fonction in autophagy as compared with RAB39A. Post-translationally, phosphorylated at Tyr-156 probably by ABL1. Dephosphorylation by PTPN2; regulates exit from the endoplasmic reticulum. Detected in all tissues examined with higher expression in steroidogenic tissues including testis and adrenal gland (at protein level). Highly expressed in liver and testis. Also found in brain, heart, kidney, lung, placenta, skeletal muscle and spleen.

The protein localises to the endoplasmic reticulum membrane. It localises to the smooth endoplasmic reticulum membrane. Its subcellular location is the endoplasmic reticulum-Golgi intermediate compartment membrane. It is found in the cytoplasmic vesicle. The protein resides in the autophagosome membrane. The protein localises to the COPII-coated vesicle membrane. It localises to the cytoplasm. Its subcellular location is the cytosol. It is found in the mitochondrion membrane. The protein resides in the autolysosome membrane. In terms of biological role, SNAREs, soluble N-ethylmaleimide-sensitive factor-attachment protein receptors, are essential proteins for fusion of cellular membranes. SNAREs localized on opposing membranes assemble to form a trans-SNARE complex, an extended, parallel four alpha-helical bundle that drives membrane fusion. STX17 is a SNARE of the autophagosome involved in autophagy through the direct control of autophagosome membrane fusion with the lysosome membrane. May also play a role in the early secretory pathway where it may maintain the architecture of the endoplasmic reticulum-Golgi intermediate compartment/ERGIC and Golgi and/or regulate transport between the endoplasmic reticulum, the ERGIC and the Golgi. The polypeptide is Syntaxin-17 (Rattus norvegicus (Rat)).